We begin with the raw amino-acid sequence, 118 residues long: Basic phospholipase A2 3 (118 aa).

Cystine bridges form between cysteine 11-cysteine 71, cysteine 27-cysteine 117, cysteine 29-cysteine 45, cysteine 44-cysteine 98, cysteine 51-cysteine 91, cysteine 60-cysteine 84, and cysteine 78-cysteine 89. Residues tyrosine 28, glycine 30, and glycine 32 each contribute to the Ca(2+) site. Histidine 48 is an active-site residue. Aspartate 49 is a Ca(2+) binding site. Aspartate 92 is an active-site residue.

The protein belongs to the phospholipase A2 family. Group I subfamily. D49 sub-subfamily. Monomer. Ca(2+) serves as cofactor. As to expression, expressed by the venom gland.

The protein localises to the secreted. The catalysed reaction is a 1,2-diacyl-sn-glycero-3-phosphocholine + H2O = a 1-acyl-sn-glycero-3-phosphocholine + a fatty acid + H(+). Functionally, PLA2 catalyzes the calcium-dependent hydrolysis of the 2-acyl groups in 3-sn-phosphoglycerides. This is Basic phospholipase A2 3 from Laticauda semifasciata (Black-banded sea krait).